The sequence spans 311 residues: Aspartate carbamoyltransferase catalytic subunit (311 aa).

Carbamoyl phosphate is bound by residues Arg59 and Thr60. Lys87 provides a ligand contact to L-aspartate. Carbamoyl phosphate contacts are provided by Arg109, His139, and Gln142. L-aspartate contacts are provided by Arg172 and Arg224. Carbamoyl phosphate contacts are provided by Ala265 and Pro266.

Belongs to the aspartate/ornithine carbamoyltransferase superfamily. ATCase family. Heterododecamer (2C3:3R2) of six catalytic PyrB chains organized as two trimers (C3), and six regulatory PyrI chains organized as three dimers (R2).

The enzyme catalyses carbamoyl phosphate + L-aspartate = N-carbamoyl-L-aspartate + phosphate + H(+). Its pathway is pyrimidine metabolism; UMP biosynthesis via de novo pathway; (S)-dihydroorotate from bicarbonate: step 2/3. Catalyzes the condensation of carbamoyl phosphate and aspartate to form carbamoyl aspartate and inorganic phosphate, the committed step in the de novo pyrimidine nucleotide biosynthesis pathway. The protein is Aspartate carbamoyltransferase catalytic subunit of Streptococcus equi subsp. equi (strain 4047).